The sequence spans 103 residues: Histone H4.1 (103 aa).

Positions 1-14 (MSGRGKGGKGLGKG) are enriched in gly residues. Residues 1–20 (MSGRGKGGKGLGKGGAKRHR) form a disordered region. Residue lysine 6 is modified to N6-acetyl-N6-methyllysine; alternate. N6-methyllysine; alternate occurs at positions 6, 9, and 13. An N6-acetyl-N6-methyllysine; alternate modification is found at lysine 13. A DNA-binding region spans residues 17–21 (KRHRK). Lysine 92 bears the N6-glutaryllysine mark.

This sequence belongs to the histone H4 family. The nucleosome is a histone octamer containing two molecules each of H2A, H2B, H3 and H4 assembled in one H3-H4 heterotetramer and two H2A-H2B heterodimers. The octamer wraps approximately 147 bp of DNA. Glutarylation at Lys-92 (H4K91glu) destabilizes nucleosomes by promoting dissociation of the H2A-H2B dimers from nucleosomes.

The protein localises to the nucleus. It localises to the chromosome. Its function is as follows. Core component of nucleosome. Nucleosomes wrap and compact DNA into chromatin, limiting DNA accessibility to the cellular machineries which require DNA as a template. Histones thereby play a central role in transcription regulation, DNA repair, DNA replication and chromosomal stability. DNA accessibility is regulated via a complex set of post-translational modifications of histones, also called histone code, and nucleosome remodeling. This is Histone H4.1 (HHF1) from Eremothecium gossypii (strain ATCC 10895 / CBS 109.51 / FGSC 9923 / NRRL Y-1056) (Yeast).